Here is a 305-residue protein sequence, read N- to C-terminus: Phosphoribosylaminoimidazole-succinocarboxamide synthase (305 aa).

Belongs to the SAICAR synthetase family.

It catalyses the reaction 5-amino-1-(5-phospho-D-ribosyl)imidazole-4-carboxylate + L-aspartate + ATP = (2S)-2-[5-amino-1-(5-phospho-beta-D-ribosyl)imidazole-4-carboxamido]succinate + ADP + phosphate + 2 H(+). It participates in purine metabolism; IMP biosynthesis via de novo pathway; 5-amino-1-(5-phospho-D-ribosyl)imidazole-4-carboxamide from 5-amino-1-(5-phospho-D-ribosyl)imidazole-4-carboxylate: step 1/2. This is Phosphoribosylaminoimidazole-succinocarboxamide synthase from Albidiferax ferrireducens (strain ATCC BAA-621 / DSM 15236 / T118) (Rhodoferax ferrireducens).